Consider the following 208-residue polypeptide: Ypt/Rab-type GTPase ypt71 (208 aa).

GTP-binding positions include 17 to 23, 33 to 40, Gly66, 124 to 127, and 158 to 160; these read SGVGKTC, FSREYKAT, NQID, and SAK. The short motif at 37–45 is the Effector region element; the sequence is YKATIGADF. S-geranylgeranyl cysteine attachment occurs at residues Cys206 and Cys208. Cys208 bears the Cysteine methyl ester mark.

Belongs to the small GTPase superfamily. Rab family.

It is found in the vacuole membrane. With respect to regulation, rab activation is generally mediated by a guanine exchange factor (GEF), while inactivation through hydrolysis of bound GTP is catalyzed by a GTPase activating protein (GAP). Ypt/Rab-type GTPases are key regulators of membrane trafficking and intracellular vesicular transport. They act as molecular switches that convert between GTP-bound and GDP-bound states, and regulate virtually all steps of membrane traffic from the formation of the transport vesicle at the donor membrane to its fusion at the target membrane. In the GDP-bound state, Ypt proteins are predominantly cytosolic, solubilized through the interaction with a GDP dissociation inhibitor (GDI). In the GTP-bound state, the proteins are membrane bound and interact with specific effector proteins that select cargo, promote vesicle movement, or verify the correct site of fusion. Act antagonistically to ypt7 in regulating vacuolar morphology, promoting vacuolar fission. The sequence is that of Ypt/Rab-type GTPase ypt71 (ypt71) from Schizosaccharomyces pombe (strain 972 / ATCC 24843) (Fission yeast).